A 618-amino-acid chain; its full sequence is Protein fem-1 homolog C (618 aa).

7 ANK repeats span residues 2–31, 40–70, 82–111, 115–144, 148–177, 181–210, and 213–243; these read DLKT…DREV, NGAT…PVEL, EGAP…SVNN, TNST…DLEV, HGHT…DVNR, KGNT…SMEK, and YGMT…GLAE. TPR repeat units lie at residues 245–279 and 337–370; these read ISAL…RHSE and SYYI…QQSN. ANK repeat units lie at residues 482–524 and 528–557; these read NGFS…DVNS and DDNS…HFDS.

Belongs to the fem-1 family. As to quaternary structure, component of a CRL2 E3 ubiquitin-protein ligase complex, also named ECS (Elongin BC-CUL2/5-SOCS-box protein) complex.

It participates in protein modification; protein ubiquitination. Substrate-recognition component of a Cul2-RING (CRL2) E3 ubiquitin-protein ligase complex of the DesCEND (destruction via C-end degrons) pathway, which recognizes a C-degron located at the extreme C terminus of target proteins, leading to their ubiquitination and degradation. The C-degron recognized by the DesCEND pathway is usually a motif of less than ten residues and can be present in full-length proteins, truncated proteins or proteolytically cleaved forms. The CRL2(FEM1C) complex specifically recognizes proteins with an arginine at the C-terminus: recognizes and binds proteins ending with -Lys/Arg-Xaa-Arg and -Lys/Arg-Xaa-Xaa-Arg C-degrons, leading to their ubiquitination and degradation. The chain is Protein fem-1 homolog C from Danio rerio (Zebrafish).